The primary structure comprises 78 residues: Exodeoxyribonuclease 7 small subunit (78 aa).

Belongs to the XseB family. Heterooligomer composed of large and small subunits.

The protein localises to the cytoplasm. The catalysed reaction is Exonucleolytic cleavage in either 5'- to 3'- or 3'- to 5'-direction to yield nucleoside 5'-phosphates.. Functionally, bidirectionally degrades single-stranded DNA into large acid-insoluble oligonucleotides, which are then degraded further into small acid-soluble oligonucleotides. This Psychromonas ingrahamii (strain DSM 17664 / CCUG 51855 / 37) protein is Exodeoxyribonuclease 7 small subunit.